We begin with the raw amino-acid sequence, 158 residues long: SsrA-binding protein (158 aa).

The tract at residues 134–158 (KLHDKRETEKERDWNRQKSRLLKTG) is disordered. The segment covering 137 to 149 (DKRETEKERDWNR) has biased composition (basic and acidic residues).

The protein belongs to the SmpB family.

It is found in the cytoplasm. Functionally, required for rescue of stalled ribosomes mediated by trans-translation. Binds to transfer-messenger RNA (tmRNA), required for stable association of tmRNA with ribosomes. tmRNA and SmpB together mimic tRNA shape, replacing the anticodon stem-loop with SmpB. tmRNA is encoded by the ssrA gene; the 2 termini fold to resemble tRNA(Ala) and it encodes a 'tag peptide', a short internal open reading frame. During trans-translation Ala-aminoacylated tmRNA acts like a tRNA, entering the A-site of stalled ribosomes, displacing the stalled mRNA. The ribosome then switches to translate the ORF on the tmRNA; the nascent peptide is terminated with the 'tag peptide' encoded by the tmRNA and targeted for degradation. The ribosome is freed to recommence translation, which seems to be the essential function of trans-translation. This chain is SsrA-binding protein, found in Allorhizobium ampelinum (strain ATCC BAA-846 / DSM 112012 / S4) (Agrobacterium vitis (strain S4)).